The primary structure comprises 454 residues: tRNA modification GTPase MnmE (454 aa).

(6S)-5-formyl-5,6,7,8-tetrahydrofolate-binding residues include arginine 23, glutamate 80, and lysine 120. The region spanning 216-377 (GMKVVIAGRP…LRNHLKQSMG (162 aa)) is the TrmE-type G domain. Asparagine 226 is a K(+) binding site. GTP is bound by residues 226 to 231 (NAGKSS), 245 to 251 (TDIAGTT), 270 to 273 (DTAG), 335 to 338 (NKAD), and 358 to 360 (SAR). Serine 230 serves as a coordination point for Mg(2+). K(+) is bound by residues threonine 245, isoleucine 247, and threonine 250. Threonine 251 serves as a coordination point for Mg(2+). (6S)-5-formyl-5,6,7,8-tetrahydrofolate is bound at residue lysine 454.

This sequence belongs to the TRAFAC class TrmE-Era-EngA-EngB-Septin-like GTPase superfamily. TrmE GTPase family. In terms of assembly, homodimer. Heterotetramer of two MnmE and two MnmG subunits. K(+) serves as cofactor.

It is found in the cytoplasm. In terms of biological role, exhibits a very high intrinsic GTPase hydrolysis rate. Involved in the addition of a carboxymethylaminomethyl (cmnm) group at the wobble position (U34) of certain tRNAs, forming tRNA-cmnm(5)s(2)U34. The chain is tRNA modification GTPase MnmE from Escherichia coli (strain SMS-3-5 / SECEC).